Reading from the N-terminus, the 227-residue chain is UPF0173 metal-dependent hydrolase BCQ_4418 (227 aa).

It belongs to the UPF0173 family.

The polypeptide is UPF0173 metal-dependent hydrolase BCQ_4418 (Bacillus cereus (strain Q1)).